Consider the following 362-residue polypeptide: Fe-S cluster assembly protein DRE2 (362 aa).

Positions 1–28 (MAPGLDLTPDFHPPTTTTTTTNNAPPQQ) are disordered. Low complexity predominate over residues 15 to 28 (TTTTTTTNNAPPQQ). Residues 24 to 165 (APPQQRTLLL…KPEYAEEEAV (142 aa)) are N-terminal SAM-like domain. The segment at 166-254 (PLRFGKKKAA…EETLLTEEDL (89 aa)) is linker. Residues C264, C275, C278, and C280 each contribute to the [2Fe-2S] cluster site. The segment at 264–280 (CQPQPGKKRRACKDCTC) is fe-S binding site A. [4Fe-4S] cluster-binding residues include C325, C328, C336, and C339. 2 consecutive short sequence motifs (cx2C motif) follow at residues 325 to 328 (CGSC) and 336 to 339 (CSDC). The fe-S binding site B stretch occupies residues 325–339 (CGSCYLGDAFRCSDC).

Belongs to the anamorsin family. As to quaternary structure, monomer. Interacts with TAH18. Interacts with MIA40. [2Fe-2S] cluster is required as a cofactor. The cofactor is [4Fe-4S] cluster.

The protein resides in the cytoplasm. Its subcellular location is the mitochondrion intermembrane space. Functionally, component of the cytosolic iron-sulfur (Fe-S) protein assembly (CIA) machinery required for the maturation of extramitochondrial Fe-S proteins. Part of an electron transfer chain functioning in an early step of cytosolic Fe-S biogenesis, facilitating the de novo assembly of a [4Fe-4S] cluster on the scaffold complex CFD1-NBP35. Electrons are transferred to DRE2 from NADPH via the FAD- and FMN-containing protein TAH18. TAH18-DRE2 are also required for the assembly of the diferric tyrosyl radical cofactor of ribonucleotide reductase (RNR), probably by providing electrons for reduction during radical cofactor maturation in the catalytic small subunit RNR2. This is Fe-S cluster assembly protein DRE2 from Chaetomium globosum (strain ATCC 6205 / CBS 148.51 / DSM 1962 / NBRC 6347 / NRRL 1970) (Soil fungus).